A 207-amino-acid polypeptide reads, in one-letter code: Zinc finger protein JAGGED-like (207 aa).

The span at 1–16 (MRADENNTLDLNNLPD) shows a compositional bias: low complexity. Residues 1 to 20 (MRADENNTLDLNNLPDDPSR) are disordered. The C2H2-type zinc finger occupies 50 to 72 (YECRFCSLKFFKSQALGGHMNRH).

In terms of tissue distribution, expressed in the emerging leaf, stamen and carpel primordia. Not expressed in the apical shoot meristem (SAM).

It localises to the nucleus. Functionally, acts with JAG to promote growth and patterning in stamens and carpels. Promotes the growth of the abaxial and adaxial sides of floral organs. Promotes the growth of the pollen-bearing microsporangia in anthers, the carpel walls of the gynoecium and the establishment of the correct number of cell layers in carpel walls. Promotes leaf blade growth and trichome development. The chain is Zinc finger protein JAGGED-like (JGL) from Arabidopsis thaliana (Mouse-ear cress).